The primary structure comprises 266 residues: Undecaprenyl-diphosphatase 1 (266 aa).

8 helical membrane passes run 1–21 (MSIIEIIVLALIQGFTEFLPI), 39–59 (QGLAFDVAVHVGTLIAVVIYF), 83–103 (SKLGWWIILGTIPAAILGLLL), 113–133 (SAWVIAVTTIIFGLLLWYADA), 141–161 (IYQLNWKTALIIGLAQAVAMI), 189–209 (FLLAIPIISMMGLYYTVELAL), 218–238 (TLLLGVVLSFLSAYVCIYMFL), and 244–264 (MGMLPFVIYRLLLGVGLIVFL).

The protein belongs to the UppP family.

Its subcellular location is the cell inner membrane. The enzyme catalyses di-trans,octa-cis-undecaprenyl diphosphate + H2O = di-trans,octa-cis-undecaprenyl phosphate + phosphate + H(+). Functionally, catalyzes the dephosphorylation of undecaprenyl diphosphate (UPP). Confers resistance to bacitracin. The chain is Undecaprenyl-diphosphatase 1 from Pseudoalteromonas translucida (strain TAC 125).